Consider the following 592-residue polypeptide: Aspartate--tRNA(Asp/Asn) ligase (592 aa).

Glu171 is a binding site for L-aspartate. The segment at 195–198 is aspartate; the sequence is QLFK. Arg217 provides a ligand contact to L-aspartate. ATP is bound by residues 217–219 and Gln226; that span reads RDE. His447 is an L-aspartate binding site. An ATP-binding site is contributed by Glu481. Arg488 serves as a coordination point for L-aspartate. 533–536 is a binding site for ATP; the sequence is GLDR.

The protein belongs to the class-II aminoacyl-tRNA synthetase family. Type 1 subfamily. In terms of assembly, homodimer.

It localises to the cytoplasm. It catalyses the reaction tRNA(Asx) + L-aspartate + ATP = L-aspartyl-tRNA(Asx) + AMP + diphosphate. In terms of biological role, aspartyl-tRNA synthetase with relaxed tRNA specificity since it is able to aspartylate not only its cognate tRNA(Asp) but also tRNA(Asn). Reaction proceeds in two steps: L-aspartate is first activated by ATP to form Asp-AMP and then transferred to the acceptor end of tRNA(Asp/Asn). The polypeptide is Aspartate--tRNA(Asp/Asn) ligase (Psychromonas ingrahamii (strain DSM 17664 / CCUG 51855 / 37)).